Here is a 488-residue protein sequence, read N- to C-terminus: PTS system mannitol-specific EIICB component (488 aa).

Topologically, residues 1-26 (MRKKLAKVKVHIQSLDSLLSSMTMPI) are cytoplasmic. The PTS EIIC type-2 domain occupies 15–362 (LDSLLSSMTM…LSLTRKKQLK (348 aa)). A helical membrane pass occupies residues 27-48 (IGIFIAWGLLASFFIPSGWTPD). Topologically, residues 49–52 (KNLA) are extracellular. A helical membrane pass occupies residues 53-73 (LMVGIGIQYVIPTIIXFFGGK). Residues 74–147 (KIYEIRGGVI…SGFEMLVNNF (74 aa)) lie on the Cytoplasmic side of the membrane. Residues 148-169 (YLGFLGFALIFPSFYLSIYLIG) form a helical membrane-spanning segment. The Extracellular portion of the chain corresponds to 170–178 (YIQLGLKLL). The chain crosses the membrane as a helical span at residues 179 to 199 (VEIMQQYKLYPIAAIVIEPAK). Topologically, residues 200-289 (VLFLNNAINH…VLLKPVLILA (90 aa)) are cytoplasmic. A helical transmembrane segment spans residues 290–309 (TIAVGVVGNGILQIFNAGTI). Topologically, residues 310–331 (APVSPGSVIAGFLQINKTPLDV) are extracellular. Residues 332-353 (AGYALALVLSAVTSLLISLLLL) traverse the membrane as a helical segment. Residues 354–488 (SLTRKKQLKT…IIEKIKNEKN (135 aa)) lie on the Cytoplasmic side of the membrane. In terms of domain architecture, PTS EIIB type-2 spans 397 to 488 (SQVTFVCDAG…IIEKIKNEKN (92 aa)). Cys403 acts as the Phosphocysteine intermediate; for EIIB activity in catalysis. A Phosphocysteine; by EIIA modification is found at Cys403.

In terms of assembly, homodimer.

The protein resides in the cell membrane. The catalysed reaction is D-mannitol(out) + N(pros)-phospho-L-histidyl-[protein] = D-mannitol 1-phosphate(in) + L-histidyl-[protein]. The phosphoenolpyruvate-dependent sugar phosphotransferase system (sugar PTS), a major carbohydrate active transport system, catalyzes the phosphorylation of incoming sugar substrates concomitantly with their translocation across the cell membrane. The enzyme II CmtAB PTS system is involved in D-mannitol transport. The chain is PTS system mannitol-specific EIICB component (mtlA) from Mycoplasma pneumoniae (strain ATCC 29342 / M129 / Subtype 1) (Mycoplasmoides pneumoniae).